A 218-amino-acid chain; its full sequence is Probable chemoreceptor glutamine deamidase CheD (218 aa).

The protein belongs to the CheD family.

It catalyses the reaction L-glutaminyl-[protein] + H2O = L-glutamyl-[protein] + NH4(+). In terms of biological role, probably deamidates glutamine residues to glutamate on methyl-accepting chemotaxis receptors (MCPs), playing an important role in chemotaxis. This Saccharophagus degradans (strain 2-40 / ATCC 43961 / DSM 17024) protein is Probable chemoreceptor glutamine deamidase CheD.